A 417-amino-acid chain; its full sequence is uncharacterized protein (417 aa).

4 consecutive transmembrane segments (helical) span residues 87-107 (LVVA…GYWI), 130-150 (IAGT…TPSV), 177-197 (FFIT…VYAA), and 202-222 (IIDT…LWPD). Over residues 366-398 (APSAPAAAEHKATSSSNSSNSSPGSSNPTTAPT) the composition is skewed to low complexity. Positions 366-417 (APSAPAAAEHKATSSSNSSNSSPGSSNPTTAPTDKFRTGSPKTQPEKISAFW) are disordered.

The protein belongs to the YccS/YhfK family.

It is found in the cell membrane. This is an uncharacterized protein from Neisseria gonorrhoeae.